The following is a 157-amino-acid chain: Ribosome maturation factor RimP (157 aa).

Belongs to the RimP family.

Its subcellular location is the cytoplasm. Required for maturation of 30S ribosomal subunits. This chain is Ribosome maturation factor RimP, found in Thermobifida fusca (strain YX).